The primary structure comprises 330 residues: Ketol-acid reductoisomerase (NADP(+)) (330 aa).

The 181-residue stretch at 2–182 (VETFYEKDAD…GCTRAGVIKT (181 aa)) folds into the KARI N-terminal Rossmann domain. Residues 25-28 (YGSQ), lysine 48, serine 51, serine 53, and 83-86 (DEVQ) each bind NADP(+). The active site involves histidine 108. Glycine 134 lines the NADP(+) pocket. The region spanning 183–328 (TFKEETETDL…EKLRAMMPWI (146 aa)) is the KARI C-terminal knotted domain. 4 residues coordinate Mg(2+): aspartate 191, glutamate 195, glutamate 227, and glutamate 231. Serine 252 contacts substrate.

It belongs to the ketol-acid reductoisomerase family. Requires Mg(2+) as cofactor.

The enzyme catalyses (2R)-2,3-dihydroxy-3-methylbutanoate + NADP(+) = (2S)-2-acetolactate + NADPH + H(+). The catalysed reaction is (2R,3R)-2,3-dihydroxy-3-methylpentanoate + NADP(+) = (S)-2-ethyl-2-hydroxy-3-oxobutanoate + NADPH + H(+). Its pathway is amino-acid biosynthesis; L-isoleucine biosynthesis; L-isoleucine from 2-oxobutanoate: step 2/4. It participates in amino-acid biosynthesis; L-valine biosynthesis; L-valine from pyruvate: step 2/4. In terms of biological role, involved in the biosynthesis of branched-chain amino acids (BCAA). Catalyzes an alkyl-migration followed by a ketol-acid reduction of (S)-2-acetolactate (S2AL) to yield (R)-2,3-dihydroxy-isovalerate. In the isomerase reaction, S2AL is rearranged via a Mg-dependent methyl migration to produce 3-hydroxy-3-methyl-2-ketobutyrate (HMKB). In the reductase reaction, this 2-ketoacid undergoes a metal-dependent reduction by NADPH to yield (R)-2,3-dihydroxy-isovalerate. The chain is Ketol-acid reductoisomerase (NADP(+)) from Petrotoga mobilis (strain DSM 10674 / SJ95).